Consider the following 330-residue polypeptide: D-cysteine desulfhydrase (330 aa).

Lysine 52 carries the post-translational modification N6-(pyridoxal phosphate)lysine.

It belongs to the ACC deaminase/D-cysteine desulfhydrase family. Homodimer. It depends on pyridoxal 5'-phosphate as a cofactor.

It catalyses the reaction D-cysteine + H2O = hydrogen sulfide + pyruvate + NH4(+) + H(+). In terms of biological role, catalyzes the alpha,beta-elimination reaction of D-cysteine and of several D-cysteine derivatives. It could be a defense mechanism against D-cysteine. This Yersinia enterocolitica serotype O:8 / biotype 1B (strain NCTC 13174 / 8081) protein is D-cysteine desulfhydrase.